The sequence spans 1087 residues: Error-prone DNA polymerase 2 (1087 aa).

The interval 1033-1064 (DGAFRPPTGRGDEFAHGSPGSADSRGKAPPGV) is disordered.

Belongs to the DNA polymerase type-C family. DnaE2 subfamily.

The protein localises to the cytoplasm. The catalysed reaction is DNA(n) + a 2'-deoxyribonucleoside 5'-triphosphate = DNA(n+1) + diphosphate. Functionally, DNA polymerase involved in damage-induced mutagenesis and translesion synthesis (TLS). It is not the major replicative DNA polymerase. This is Error-prone DNA polymerase 2 from Rhizobium meliloti (strain 1021) (Ensifer meliloti).